The chain runs to 189 residues: Cytochrome b6-f complex subunit 4 (189 aa).

A run of 3 helical transmembrane segments spans residues 36–56, 103–123, and 139–159; these read LSYIFPVVILGTIACTIGLAV, LLGVLLMASVPAGSLTVPFLE, and TVSLIGTAVALWLGIGAALPI.

It belongs to the cytochrome b family. PetD subfamily. In terms of assembly, the 4 large subunits of the cytochrome b6-f complex are cytochrome b6, subunit IV (17 kDa polypeptide, petD), cytochrome f and the Rieske protein, while the 4 small subunits are petG, petL, petM and petN. The complex functions as a dimer.

The protein localises to the plastid. It is found in the chloroplast thylakoid membrane. Its function is as follows. Component of the cytochrome b6-f complex, which mediates electron transfer between photosystem II (PSII) and photosystem I (PSI), cyclic electron flow around PSI, and state transitions. This Pinus koraiensis (Korean pine) protein is Cytochrome b6-f complex subunit 4.